Consider the following 641-residue polypeptide: Probable potassium transport system protein Kup 4 (641 aa).

The next 12 membrane-spanning stretches (helical) occupy residues 31-51 (AALG…LYTL), 64-84 (TASA…TISI), 119-139 (ILAV…VITP), 155-175 (GSLK…FFAA), 183-203 (IGAA…VLGL), 221-241 (AIGF…GVFL), 265-285 (WYAI…ALLI), 298-318 (LCPT…TIIA), 355-375 (IYVP…TIAF), 381-401 (LAGA…CLLF), 412-432 (LAVS…FFGA), and 437-457 (IAEG…LMLT).

The protein belongs to the HAK/KUP transporter (TC 2.A.72) family.

It localises to the cell inner membrane. The catalysed reaction is K(+)(in) + H(+)(in) = K(+)(out) + H(+)(out). In terms of biological role, transport of potassium into the cell. Likely operates as a K(+):H(+) symporter. In Bradyrhizobium sp. (strain BTAi1 / ATCC BAA-1182), this protein is Probable potassium transport system protein Kup 4.